Here is a 258-residue protein sequence, read N- to C-terminus: UPF0246 protein VS_0505 (258 aa).

It belongs to the UPF0246 family.

In Vibrio atlanticus (strain LGP32) (Vibrio splendidus (strain Mel32)), this protein is UPF0246 protein VS_0505.